A 215-amino-acid chain; its full sequence is Pyrrolidone-carboxylate peptidase (215 aa).

Active-site residues include glutamate 78, cysteine 141, and histidine 165.

This sequence belongs to the peptidase C15 family. In terms of assembly, homotetramer.

Its subcellular location is the cytoplasm. It catalyses the reaction Release of an N-terminal pyroglutamyl group from a polypeptide, the second amino acid generally not being Pro.. Functionally, removes 5-oxoproline from various penultimate amino acid residues except L-proline. The protein is Pyrrolidone-carboxylate peptidase (pcp) of Streptococcus pyogenes serotype M1.